The sequence spans 251 residues: Pantothenate synthetase (251 aa).

28–35 serves as a coordination point for ATP; that stretch reads MGALHTGH. Catalysis depends on histidine 35, which acts as the Proton donor. Glutamine 59 contacts (R)-pantoate. Beta-alanine is bound at residue glutamine 59. 145-148 serves as a coordination point for ATP; sequence GEKD. Glutamine 151 provides a ligand contact to (R)-pantoate. ATP is bound by residues valine 174 and 182-185; that span reads KSSR.

Belongs to the pantothenate synthetase family. As to quaternary structure, homodimer.

It localises to the cytoplasm. It carries out the reaction (R)-pantoate + beta-alanine + ATP = (R)-pantothenate + AMP + diphosphate + H(+). Its pathway is cofactor biosynthesis; (R)-pantothenate biosynthesis; (R)-pantothenate from (R)-pantoate and beta-alanine: step 1/1. Catalyzes the condensation of pantoate with beta-alanine in an ATP-dependent reaction via a pantoyl-adenylate intermediate. The polypeptide is Pantothenate synthetase (Bdellovibrio bacteriovorus (strain ATCC 15356 / DSM 50701 / NCIMB 9529 / HD100)).